The sequence spans 196 residues: MSIEVFNESGYDGVNEEMLIDVLSFALGEMDIHPDAEASIHIVDVDTIADLHVKWLDLEGPTDVMSFPMDELTPGYSRPDGATPGPAMLGDIVLCPEFAAKQATKAGHDLAHELALLTVHGSLHLLGYDHVDPAEEREMFALQNELLADWYDNVEARGVTYQPKPSGAGAFPTAADRLELDEKMEADDSGFGGVES.

Zn(2+) is bound by residues His-120, His-124, and His-130.

This sequence belongs to the endoribonuclease YbeY family. The cofactor is Zn(2+).

Its subcellular location is the cytoplasm. Single strand-specific metallo-endoribonuclease involved in late-stage 70S ribosome quality control and in maturation of the 3' terminus of the 16S rRNA. The protein is Endoribonuclease YbeY of Corynebacterium glutamicum (strain ATCC 13032 / DSM 20300 / JCM 1318 / BCRC 11384 / CCUG 27702 / LMG 3730 / NBRC 12168 / NCIMB 10025 / NRRL B-2784 / 534).